Here is a 776-residue protein sequence, read N- to C-terminus: Probable exo-1,4-beta-xylosidase bxlB (776 aa).

The N-terminal stretch at 1–23 (MVHLSPLLRPLAAFSFFTSLAST) is a signal peptide. N65 and N105 each carry an N-linked (GlcNAc...) asparagine glycan. D291 is a catalytic residue. Residues N343, N410, N421, N462, N623, and N766 are each glycosylated (N-linked (GlcNAc...) asparagine).

This sequence belongs to the glycosyl hydrolase 3 family.

The protein localises to the secreted. The catalysed reaction is Hydrolysis of (1-&gt;4)-beta-D-xylans, to remove successive D-xylose residues from the non-reducing termini.. It functions in the pathway glycan degradation; xylan degradation. Functionally, xylan 1,4-beta-xylosidase involved in the hydrolysis of xylan, a major structural heterogeneous polysaccharide found in plant biomass representing the second most abundant polysaccharide in the biosphere, after cellulose. This Aspergillus flavus (strain ATCC 200026 / FGSC A1120 / IAM 13836 / NRRL 3357 / JCM 12722 / SRRC 167) protein is Probable exo-1,4-beta-xylosidase bxlB (bxlB).